A 259-amino-acid chain; its full sequence is DNA repair protein RecO (259 aa).

The protein belongs to the RecO family.

In terms of biological role, involved in DNA repair and RecF pathway recombination. The chain is DNA repair protein RecO from Chloroherpeton thalassium (strain ATCC 35110 / GB-78).